The chain runs to 315 residues: Voltage-dependent calcium channel gamma-3 subunit (315 aa).

Helical transmembrane passes span 8 to 28 (IQML…TIAV), 104 to 124 (SSVF…CVAA), 135 to 155 (ILSA…GIIV), and 181 to 201 (FGAF…HIYI). Ser248 carries the phosphoserine modification.

This sequence belongs to the PMP-22/EMP/MP20 family. CACNG subfamily. As to quaternary structure, the L-type calcium channel is composed of five subunits: alpha-1, alpha-2/delta, beta and gamma. Acts as an auxiliary subunit for AMPA-selective glutamate receptors (AMPARs). Found in a complex with GRIA1, GRIA2, GRIA3, GRIA4, CNIH2, CNIH3, CACNG2, CACNG4, CACNG5, CACNG7 and CACNG8. Interacts with AP4M1 and GRIA1; associates GRIA1 with the adaptor protein complex 4 (AP-4) to target GRIA1 to the somatodendritic compartment of neurons.

The protein resides in the membrane. Regulates the trafficking to the somatodendritic compartment and gating properties of AMPA-selective glutamate receptors (AMPARs). Promotes their targeting to the cell membrane and synapses and modulates their gating properties by slowing their rates of activation, deactivation and desensitization. Does not show subunit-specific AMPA receptor regulation and regulates all AMPAR subunits. Thought to stabilize the calcium channel in an inactivated (closed) state. This Homo sapiens (Human) protein is Voltage-dependent calcium channel gamma-3 subunit (CACNG3).